A 253-amino-acid chain; its full sequence is 5'/3'-nucleotidase SurE (253 aa).

Asp8, Asp9, Ser39, and Asn92 together coordinate a divalent metal cation.

Belongs to the SurE nucleotidase family. It depends on a divalent metal cation as a cofactor.

It is found in the cytoplasm. It carries out the reaction a ribonucleoside 5'-phosphate + H2O = a ribonucleoside + phosphate. The catalysed reaction is a ribonucleoside 3'-phosphate + H2O = a ribonucleoside + phosphate. It catalyses the reaction [phosphate](n) + H2O = [phosphate](n-1) + phosphate + H(+). Functionally, nucleotidase with a broad substrate specificity as it can dephosphorylate various ribo- and deoxyribonucleoside 5'-monophosphates and ribonucleoside 3'-monophosphates with highest affinity to 3'-AMP. Also hydrolyzes polyphosphate (exopolyphosphatase activity) with the preference for short-chain-length substrates (P20-25). Might be involved in the regulation of dNTP and NTP pools, and in the turnover of 3'-mononucleotides produced by numerous intracellular RNases (T1, T2, and F) during the degradation of various RNAs. This Serratia proteamaculans (strain 568) protein is 5'/3'-nucleotidase SurE.